The chain runs to 696 residues: Elongation factor G (696 aa).

In terms of domain architecture, tr-type G spans 8 to 290 (ERYRNIGISA…KVIELMPAPT (283 aa)). Residues 17–24 (AHIDAGKT), 88–92 (DTPGH), and 142–145 (NKMD) contribute to the GTP site.

Belongs to the TRAFAC class translation factor GTPase superfamily. Classic translation factor GTPase family. EF-G/EF-2 subfamily.

The protein localises to the cytoplasm. Catalyzes the GTP-dependent ribosomal translocation step during translation elongation. During this step, the ribosome changes from the pre-translocational (PRE) to the post-translocational (POST) state as the newly formed A-site-bound peptidyl-tRNA and P-site-bound deacylated tRNA move to the P and E sites, respectively. Catalyzes the coordinated movement of the two tRNA molecules, the mRNA and conformational changes in the ribosome. This chain is Elongation factor G, found in Thiobacillus denitrificans (strain ATCC 25259 / T1).